The primary structure comprises 141 residues: Large ribosomal subunit protein uL11 (141 aa).

It belongs to the universal ribosomal protein uL11 family. In terms of assembly, part of the ribosomal stalk of the 50S ribosomal subunit. Interacts with L10 and the large rRNA to form the base of the stalk. L10 forms an elongated spine to which L12 dimers bind in a sequential fashion forming a multimeric L10(L12)X complex. In terms of processing, one or more lysine residues are methylated.

Functionally, forms part of the ribosomal stalk which helps the ribosome interact with GTP-bound translation factors. This chain is Large ribosomal subunit protein uL11, found in Roseiflexus castenholzii (strain DSM 13941 / HLO8).